We begin with the raw amino-acid sequence, 127 residues long: S-adenosylmethionine decarboxylase proenzyme (127 aa).

Ser-63 serves as the catalytic Schiff-base intermediate with substrate; via pyruvic acid. Position 63 is a pyruvic acid (Ser); by autocatalysis (Ser-63). His-68 serves as the catalytic Proton acceptor; for processing activity. Cys-83 (proton donor; for catalytic activity) is an active-site residue.

This sequence belongs to the prokaryotic AdoMetDC family. Type 1 subfamily. As to quaternary structure, heterotetramer of two alpha and two beta chains arranged as a dimer of alpha/beta heterodimers. Requires pyruvate as cofactor. Is synthesized initially as an inactive proenzyme. Formation of the active enzyme involves a self-maturation process in which the active site pyruvoyl group is generated from an internal serine residue via an autocatalytic post-translational modification. Two non-identical subunits are generated from the proenzyme in this reaction, and the pyruvate is formed at the N-terminus of the alpha chain, which is derived from the carboxyl end of the proenzyme. The post-translation cleavage follows an unusual pathway, termed non-hydrolytic serinolysis, in which the side chain hydroxyl group of the serine supplies its oxygen atom to form the C-terminus of the beta chain, while the remainder of the serine residue undergoes an oxidative deamination to produce ammonia and the pyruvoyl group blocking the N-terminus of the alpha chain.

It carries out the reaction S-adenosyl-L-methionine + H(+) = S-adenosyl 3-(methylsulfanyl)propylamine + CO2. It functions in the pathway amine and polyamine biosynthesis; S-adenosylmethioninamine biosynthesis; S-adenosylmethioninamine from S-adenosyl-L-methionine: step 1/1. Catalyzes the decarboxylation of S-adenosylmethionine to S-adenosylmethioninamine (dcAdoMet), the propylamine donor required for the synthesis of the polyamines spermine and spermidine from the diamine putrescine. The sequence is that of S-adenosylmethionine decarboxylase proenzyme from Carboxydothermus hydrogenoformans (strain ATCC BAA-161 / DSM 6008 / Z-2901).